A 591-amino-acid chain; its full sequence is NADP-dependent malic enzyme (591 aa).

Tyr-139 serves as the catalytic Proton donor. Position 192 (Arg-192) interacts with NAD(+). Catalysis depends on Lys-210, which acts as the Proton acceptor. Residues Glu-282, Asp-283, and Asp-306 each coordinate a divalent metal cation. Asp-306 contacts NAD(+). 335–351 (LFLGAGEAGTGIAELIA) contributes to the NADP(+) binding site. Asn-447 is a binding site for NAD(+).

This sequence belongs to the malic enzymes family. As to quaternary structure, homotetramer. Mg(2+) is required as a cofactor. Requires Mn(2+) as cofactor.

The protein localises to the cytoplasm. The enzyme catalyses (S)-malate + NADP(+) = pyruvate + CO2 + NADPH. The catalysed reaction is oxaloacetate + H(+) = pyruvate + CO2. The polypeptide is NADP-dependent malic enzyme (Vitis vinifera (Grape)).